The sequence spans 486 residues: Bifunctional protein HldE (486 aa).

The interval 1–331 is ribokinase; that stretch reads MAEHDDGDLI…VDAVKPASGA (331 aa). Position 208–211 (208–211) interacts with ATP; the sequence is NRRE. Asp-277 is an active-site residue. Residues 357–486 are cytidylyltransferase; it reads FTNGCFDLLH…TTATVTRLRS (130 aa).

It in the N-terminal section; belongs to the carbohydrate kinase PfkB family. The protein in the C-terminal section; belongs to the cytidylyltransferase family. Homodimer.

The catalysed reaction is D-glycero-beta-D-manno-heptose 7-phosphate + ATP = D-glycero-beta-D-manno-heptose 1,7-bisphosphate + ADP + H(+). It carries out the reaction D-glycero-beta-D-manno-heptose 1-phosphate + ATP + H(+) = ADP-D-glycero-beta-D-manno-heptose + diphosphate. It functions in the pathway nucleotide-sugar biosynthesis; ADP-L-glycero-beta-D-manno-heptose biosynthesis; ADP-L-glycero-beta-D-manno-heptose from D-glycero-beta-D-manno-heptose 7-phosphate: step 1/4. Its pathway is nucleotide-sugar biosynthesis; ADP-L-glycero-beta-D-manno-heptose biosynthesis; ADP-L-glycero-beta-D-manno-heptose from D-glycero-beta-D-manno-heptose 7-phosphate: step 3/4. In terms of biological role, catalyzes the phosphorylation of D-glycero-D-manno-heptose 7-phosphate at the C-1 position to selectively form D-glycero-beta-D-manno-heptose-1,7-bisphosphate. Functionally, catalyzes the ADP transfer from ATP to D-glycero-beta-D-manno-heptose 1-phosphate, yielding ADP-D-glycero-beta-D-manno-heptose. The sequence is that of Bifunctional protein HldE from Acidiphilium cryptum (strain JF-5).